Reading from the N-terminus, the 691-residue chain is Kinetochore protein NDC80 (691 aa).

The disordered stretch occupies residues 1–95 (MQSSTSTDQH…LNDKSNSRNS (95 aa)). The span at 10–19 (HVLHHMDPHR) shows a compositional bias: basic and acidic residues. Positions 20–42 (FTSQIPTATSSQLRRRNSTNQGL) are enriched in polar residues. Thr-38 is subject to Phosphothreonine. Residues 54 to 65 (TISGTGIPTGGI) show a composition bias toward low complexity. Thr-248 is subject to Phosphothreonine. Coiled coils occupy residues 376-446 (GKLE…SIKS) and 522-686 (KKSI…FETE).

The protein belongs to the NDC80/HEC1 family. In terms of assembly, component of the NDC80 complex, which consists of NDC80, NUF2, SPC24 and SPC25. The NDC80 complex is formed by two subcomplexes, NDC80-NUF2 and SPC24-SPC25, which are joined end-to-end through their coiled-coil domains. It has a rod-like structure with a length of 570 Angstroms and globular domains at either end. The NDC80-NUF2 globular domains are probably directed to microtubules, the SPC24-SPC25 globular domains to the centromere. NDC80 probably interacts with SMC1 and SMC2. Also interacts with KIN3. Interacts with DMC1.

It localises to the nucleus. The protein resides in the chromosome. The protein localises to the centromere. It is found in the kinetochore. Acts as a component of the essential kinetochore-associated NDC80 complex, which is involved in chromosome segregation and spindle checkpoint activity. The sequence is that of Kinetochore protein NDC80 from Saccharomyces cerevisiae (strain ATCC 204508 / S288c) (Baker's yeast).